Here is a 491-residue protein sequence, read N- to C-terminus: MDRRDMTISAWRQQLQSGEVSSRELVDQHLKRLESSEPSLNAFVEVTADQARAEASRIDEARAAGEALGPLAGLPLAIKDNLCTKGVRTTCSSRMLEQFVPPYESTVTERLWQAGGVLVGKTNLDEFAMGGSTETSAFGATQNPWNTAHVPGGSSGGSAAAVAAGSCVASLGSDTGGSIRQPASFCGVVGLKPTYGRVSRWGLVAFASSLDQVGPFAGSVADVAELLQVIAGPDPRDSTCLDAAVPVFSDGLSQSIKGLKVGLIKECFDAEGLDPEVKASVQASAAQLEALGAELVEVSCPRFNDGIATYYVIAPSEASANLARYDGVKYGFRAEDAESLAAMTARSRAEAFGAEVQRRILIGTYALSAGYVDAYYKKAQQVRTLIRRDFDAAFKSVDVLLTPTAPSTAFKAGAHADDPLAMYLADLLTIPVNLAGLPAISVPCGFSAAGLPIGMQLIGNVLDEPRLLQVAHQYEQAAQVFASRPEAALVP.

Catalysis depends on charge relay system residues K79 and S154. S178 functions as the Acyl-ester intermediate in the catalytic mechanism.

Belongs to the amidase family. GatA subfamily. As to quaternary structure, heterotrimer of A, B and C subunits.

The enzyme catalyses L-glutamyl-tRNA(Gln) + L-glutamine + ATP + H2O = L-glutaminyl-tRNA(Gln) + L-glutamate + ADP + phosphate + H(+). Functionally, allows the formation of correctly charged Gln-tRNA(Gln) through the transamidation of misacylated Glu-tRNA(Gln) in organisms which lack glutaminyl-tRNA synthetase. The reaction takes place in the presence of glutamine and ATP through an activated gamma-phospho-Glu-tRNA(Gln). The chain is Glutamyl-tRNA(Gln) amidotransferase subunit A from Synechococcus sp. (strain CC9605).